Here is a 546-residue protein sequence, read N- to C-terminus: Crossover junction endonuclease EME1A (546 aa).

Disordered stretches follow at residues 1-55 and 88-232; these read MSDF…FLDE and VISL…REKQ. Positions 28-49 are enriched in polar residues; sequence PTDLNLDTEPSLQKQPPGSAST. 2 stretches are compositionally biased toward basic and acidic residues: residues 103–120 and 149–167; these read SSKK…KPCR and DAIE…VEKM. Over residues 173–183 the composition is skewed to polar residues; it reads TITSKSTSLSA. Residues 188–245 adopt a coiled-coil conformation; the sequence is KKKMSKDEKTRAAEEKKLQKEQEKLQKAASKAEDAEHKKLEREKQKWAKEKDKALKCI. Over residues 192–232 the composition is skewed to basic and acidic residues; sequence SKDEKTRAAEEKKLQKEQEKLQKAASKAEDAEHKKLEREKQ. An ERCC4 domain is found at 278-478; it reads NPIQRSIVWT…PSLKSLLKVY (201 aa).

It belongs to the EME1/MMS4 family. In terms of assembly, forms a heterodimer with MUS81. Requires Mg(2+) as cofactor. The cofactor is Ca(2+).

Its subcellular location is the nucleus. Interacts with MUS81 to form a DNA structure-specific endonuclease with substrate preference for branched DNA structures with a 5'-end at the branch nick. Typical substrates include 3'-flap structures, D-loops, replication forks, nicked Holliday junctions and also intact Holliday junctions with a reduced efficiency. May be required in mitosis for the processing of stalled or collapsed replication fork intermediates. Plays a role in DNA repair and in genotoxic stress-induced homologous recombination (HR) in somatic cells. Mediates a subset of meiotic recombination events that are insensitive to crossover interference. In Arabidopsis thaliana (Mouse-ear cress), this protein is Crossover junction endonuclease EME1A (EME1A).